A 329-amino-acid polypeptide reads, in one-letter code: UDP-2,3-diacylglucosamine pyrophosphatase LpxG (329 aa).

Residues 2-24 (FVFVGSTVSLTAIVAAPVLTWIW) traverse the membrane as a helical segment. A divalent metal cation-binding residues include Asp-59, His-61, Asp-91, Asn-123, His-257, and His-259.

Belongs to the metallophosphoesterase superfamily. Mn(2+) serves as cofactor.

It localises to the cell inner membrane. The catalysed reaction is UDP-2,3-diacyl-alpha-D-glucosamine + H2O = 2,3-diacyl-alpha-D-glucosaminyl 1-phosphate + UMP + 2 H(+). It functions in the pathway glycolipid biosynthesis; lipid IV(A) biosynthesis. Functionally, hydrolyzes the pyrophosphate bond of UDP-2,3-diacylglucosamine to form 2,3-diacylglucosamine 1-phosphate (lipid X) and UMP by catalyzing the attack of water at the alpha-P atom. Involved in the biosynthesis of lipid A, a phosphorylated glycolipid that anchors the lipooligosaccharide (LOS) to the outer membrane of the cell. This chain is UDP-2,3-diacylglucosamine pyrophosphatase LpxG, found in Chlamydia muridarum (strain MoPn / Nigg).